Here is a 345-residue protein sequence, read N- to C-terminus: Ferrochelatase (345 aa).

Residues histidine 215 and glutamate 296 each coordinate Fe cation.

Belongs to the ferrochelatase family.

The protein localises to the cytoplasm. The enzyme catalyses heme b + 2 H(+) = protoporphyrin IX + Fe(2+). It participates in porphyrin-containing compound metabolism; protoheme biosynthesis; protoheme from protoporphyrin-IX: step 1/1. In terms of biological role, catalyzes the ferrous insertion into protoporphyrin IX. The protein is Ferrochelatase of Nitrobacter hamburgensis (strain DSM 10229 / NCIMB 13809 / X14).